The sequence spans 756 residues: Ent-kaurene synthase, chloroplastic (756 aa).

Mg(2+) is bound by residues D507 and D511. A DDXXD motif motif is present at residues 507 to 511 (DDFFD). The helical transmembrane segment at 606–622 (YVSFALGPIVLPCLYLV) threads the bilayer. Residues N651, T655, and E659 each contribute to the Mg(2+) site.

The protein belongs to the terpene synthase family. It depends on Mg(2+) as a cofactor. In terms of tissue distribution, present in both leaves and flowers.

The protein localises to the plastid. Its subcellular location is the chloroplast membrane. It carries out the reaction ent-copalyl diphosphate = ent-kaur-16-ene + diphosphate. It functions in the pathway plant hormone biosynthesis; gibberellin biosynthesis. In terms of biological role, involved in the biosynthesis of labdane-type diterpenoid including marrubiin and other labdane-related furanoid diterpenoids with potential applications as anti-diabetics, analgesics or vasorelaxants. Terpene synthase that produces ent-kaurene from ent-copalyl diphosphate (ent-CPP). The protein is Ent-kaurene synthase, chloroplastic of Marrubium vulgare (White horehound).